The following is a 148-amino-acid chain: Aspartate carbamoyltransferase regulatory chain (148 aa).

Zn(2+) contacts are provided by cysteine 106, cysteine 111, cysteine 134, and cysteine 137.

This sequence belongs to the PyrI family. Contains catalytic and regulatory chains. The cofactor is Zn(2+).

Its function is as follows. Involved in allosteric regulation of aspartate carbamoyltransferase. The protein is Aspartate carbamoyltransferase regulatory chain of Methanococcus maripaludis (strain C6 / ATCC BAA-1332).